Reading from the N-terminus, the 345-residue chain is NADH-ubiquinone oxidoreductase chain 2 (345 aa).

10 helical membrane-spanning segments follow: residues 1-21 (MNPITLAIIYFTIFLGPVITM), 25-45 (NLMLMWVGLEFSLLAIIPMLI), 56-76 (ATKYFVTQATASMIILLAIVL), 92-114 (GLILNMTLMALSMKLGLAPFHFW), 149-171 (LNSTIILMLAITSIFMGAWGGLN), 178-198 (IMAYSSIAHMGWMLAILPYNP), 200-220 (LTLLNLMIYIILTAPMFMALM), 241-261 (LTMISLMLLSLGGLPPLTGFL), 274-294 (NCLIMATLMAMMALLNLFFYT), and 324-344 (LMFSTLAIMSTMTLPLAPQLI).

This sequence belongs to the complex I subunit 2 family. As to quaternary structure, core subunit of respiratory chain NADH dehydrogenase (Complex I) which is composed of 45 different subunits. Interacts with TMEM242.

The protein resides in the mitochondrion inner membrane. The enzyme catalyses a ubiquinone + NADH + 5 H(+)(in) = a ubiquinol + NAD(+) + 4 H(+)(out). Its function is as follows. Core subunit of the mitochondrial membrane respiratory chain NADH dehydrogenase (Complex I) which catalyzes electron transfer from NADH through the respiratory chain, using ubiquinone as an electron acceptor. Essential for the catalytic activity and assembly of complex I. This is NADH-ubiquinone oxidoreductase chain 2 from Mus musculus (Mouse).